The chain runs to 446 residues: RUN domain-containing protein 3A (446 aa).

The interval 1–298 (METSFVQTTM…LQLQLEEAAA (298 aa)) is interaction with RAP2A. The 138-residue stretch at 52–189 (DDSSEEFVNF…IDFSFCLKGE (138 aa)) folds into the RUN domain. Residue T215 is modified to Phosphothreonine. The interval 216–239 (DEEERHSAESSTSEDNSPEHPYLP) is disordered. Position 232 is a phosphoserine (S232). The stretch at 267-322 (YLEELVRLRESQLKDLEAENRRLQLQLEEAAAQNQREKRELEGVILELQEQLTGLI) forms a coiled coil. Residues 372 to 384 (PLSAEASLSSDSQ) are compositionally biased toward polar residues. Residues 372–404 (PLSAEASLSSDSQRLGEGTRDEEPWGPIGKDPT) form a disordered region. 2 positions are modified to phosphoserine: S416 and S419.

The protein belongs to the RUNDC3 family. In terms of assembly, interacts with the GTP-bound form of RAP2A.

Its function is as follows. May act as an effector of RAP2A in neuronal cells. The chain is RUN domain-containing protein 3A (RUNDC3A) from Pongo abelii (Sumatran orangutan).